Consider the following 276-residue polypeptide: Sulfur carrier protein FdhD (276 aa).

The Cysteine persulfide intermediate role is filled by C122. 259 to 264 (FCRRGR) is a binding site for Mo-bis(molybdopterin guanine dinucleotide).

The protein belongs to the FdhD family.

Its subcellular location is the cytoplasm. Its function is as follows. Required for formate dehydrogenase (FDH) activity. Acts as a sulfur carrier protein that transfers sulfur from IscS to the molybdenum cofactor prior to its insertion into FDH. The protein is Sulfur carrier protein FdhD of Proteus mirabilis (strain HI4320).